The primary structure comprises 549 residues: Chaperonin GroEL (549 aa).

ATP is bound by residues Thr-29–Pro-32, Lys-50, Asp-86–Thr-90, Gly-414, Asn-477–Ala-479, and Asp-493.

The protein belongs to the chaperonin (HSP60) family. In terms of assembly, forms a cylinder of 14 subunits composed of two heptameric rings stacked back-to-back. Interacts with the co-chaperonin GroES.

It is found in the cytoplasm. It catalyses the reaction ATP + H2O + a folded polypeptide = ADP + phosphate + an unfolded polypeptide.. Together with its co-chaperonin GroES, plays an essential role in assisting protein folding. The GroEL-GroES system forms a nano-cage that allows encapsulation of the non-native substrate proteins and provides a physical environment optimized to promote and accelerate protein folding. In Geotalea uraniireducens (strain Rf4) (Geobacter uraniireducens), this protein is Chaperonin GroEL.